The following is a 41-amino-acid chain: Large ribosomal subunit protein bL36 (41 aa).

The protein belongs to the bacterial ribosomal protein bL36 family.

This is Large ribosomal subunit protein bL36 from Novosphingobium aromaticivorans (strain ATCC 700278 / DSM 12444 / CCUG 56034 / CIP 105152 / NBRC 16084 / F199).